The sequence spans 335 residues: Methionine import ATP-binding protein MetN 1 (335 aa).

Residues 2–242 enclose the ABC transporter domain; that stretch reads IEFHNVHKTY…PQHATTRRFV (241 aa). 38-45 provides a ligand contact to ATP; it reads GHSGAGKS.

Belongs to the ABC transporter superfamily. Methionine importer (TC 3.A.1.24) family. The complex is composed of two ATP-binding proteins (MetN), two transmembrane proteins (MetI) and a solute-binding protein (MetQ).

Its subcellular location is the cell inner membrane. The enzyme catalyses L-methionine(out) + ATP + H2O = L-methionine(in) + ADP + phosphate + H(+). The catalysed reaction is D-methionine(out) + ATP + H2O = D-methionine(in) + ADP + phosphate + H(+). In terms of biological role, part of the ABC transporter complex MetNIQ involved in methionine import. Responsible for energy coupling to the transport system. This Pseudomonas syringae pv. syringae (strain B728a) protein is Methionine import ATP-binding protein MetN 1.